A 75-amino-acid polypeptide reads, in one-letter code: Brevinin-2ISc (75 aa).

An N-terminal signal peptide occupies residues 1 to 22 (MFTLKKSLLLLFFLGTISLSLC). Positions 23–40 (EEERDADEDEGEMTEEEV) are cleaved as a propeptide — removed in mature form. Cys69 and Cys75 are oxidised to a cystine.

In terms of tissue distribution, expressed by the skin glands.

Its subcellular location is the secreted. Functionally, has antimicrobial activity against Gram-negative bacterium E.coli ATCC 8739 (MIC=50 ug) and against Gram positive bacteria S.aureus ATCC 6538 (MIC=25 ug). Has no activity against methicillin-resistant S.aureus ATCC 43300, B.subtilis ATCC 6633 and against fungus C.albicans ATCC 90028. The chain is Brevinin-2ISc from Odorrana ishikawae (Ishikawa's frog).